The sequence spans 231 residues: Large ribosomal subunit protein uL1 (231 aa).

This sequence belongs to the universal ribosomal protein uL1 family. In terms of assembly, part of the 50S ribosomal subunit.

Functionally, binds directly to 23S rRNA. The L1 stalk is quite mobile in the ribosome, and is involved in E site tRNA release. In terms of biological role, protein L1 is also a translational repressor protein, it controls the translation of the L11 operon by binding to its mRNA. This chain is Large ribosomal subunit protein uL1, found in Pseudomonas putida (strain ATCC 700007 / DSM 6899 / JCM 31910 / BCRC 17059 / LMG 24140 / F1).